Reading from the N-terminus, the 466-residue chain is FERM domain-containing protein 8 (466 aa).

Met1 carries the N-acetylmethionine modification. Residues 1 to 21 form a disordered region; that stretch reads MEGAEGNAGQPGPAERSHRSS. Phosphoserine is present on Ser24. The FERM domain maps to 30-377; sequence ADVLVYLADD…YCIELSQAAE (348 aa). Residues 379–409 form a disordered region; sequence TLSQESASGPHEAPSPSPPPTQRPKLRRQGS. Ser384 is subject to Phosphoserine. Residues 391-400 show a composition bias toward pro residues; the sequence is APSPSPPPTQ. At Ser409 the chain carries Phosphoserine. Residue Thr420 is modified to Phosphothreonine. Phosphoserine is present on residues Ser440 and Ser447. A compositionally biased stretch (polar residues) spans 442–460; it reads FSRQLSSSQGSYTVVQPTD. The interval 442-466 is disordered; it reads FSRQLSSSQGSYTVVQPTDDSLEQS.

In terms of assembly, interacts with iRhom proteins, including iRhom2/RHBDF2 (via cytoplasmic N-termini); this interaction leads to mutual protein stabilization. Interacts with LRP6; this interaction affects LRP6-binding to AXIN1. Widely expressed (at protein level).

It localises to the cytoplasm. Its subcellular location is the cytosol. It is found in the cell membrane. Functionally, promotes the cell surface stability of iRhom1/RHBDF1 and iRhom2/RHBDF2 and prevents their degradation via the endolysosomal pathway. By acting on iRhoms, involved in ADAM17-mediated shedding of TNF, amphiregulin/AREG, HBEGF and TGFA from the cell surface. Negatively regulates Wnt signaling, possibly by antagonizing the recruitment of AXIN1 to LRP6. The sequence is that of FERM domain-containing protein 8 (Frmd8) from Mus musculus (Mouse).